Consider the following 63-residue polypeptide: Small ribosomal subunit protein eS27 (63 aa).

The Zn(2+) site is built by cysteine 18, cysteine 21, cysteine 37, and cysteine 40. The C4-type zinc finger occupies 18 to 40 (CLDCGNQQVVFDRAASYVQCIIC).

It belongs to the eukaryotic ribosomal protein eS27 family. In terms of assembly, part of the 30S ribosomal subunit. Requires Zn(2+) as cofactor.

This Methanothermobacter thermautotrophicus (strain ATCC 29096 / DSM 1053 / JCM 10044 / NBRC 100330 / Delta H) (Methanobacterium thermoautotrophicum) protein is Small ribosomal subunit protein eS27.